The following is a 621-amino-acid chain: Type 2 DNA topoisomerase 6 subunit B (621 aa).

ATP is bound by residues Asn-48, Asp-80, 101-102, 111-118, and Lys-435; these read SR and GQQGIGIS.

This sequence belongs to the TOP6B family. As to quaternary structure, homodimer. Heterotetramer of two Top6A and two Top6B chains.

It carries out the reaction ATP-dependent breakage, passage and rejoining of double-stranded DNA.. Its function is as follows. Relaxes both positive and negative superturns and exhibits a strong decatenase activity. The sequence is that of Type 2 DNA topoisomerase 6 subunit B from Methanosarcina barkeri (strain Fusaro / DSM 804).